Consider the following 181-residue polypeptide: Large ribosomal subunit protein uL5 (181 aa).

The protein belongs to the universal ribosomal protein uL5 family. In terms of assembly, part of the 50S ribosomal subunit; part of the 5S rRNA/L5/L18/L25 subcomplex. Contacts the 5S rRNA and the P site tRNA. Forms a bridge to the 30S subunit in the 70S ribosome.

This is one of the proteins that bind and probably mediate the attachment of the 5S RNA into the large ribosomal subunit, where it forms part of the central protuberance. In the 70S ribosome it contacts protein S13 of the 30S subunit (bridge B1b), connecting the 2 subunits; this bridge is implicated in subunit movement. Contacts the P site tRNA; the 5S rRNA and some of its associated proteins might help stabilize positioning of ribosome-bound tRNAs. The chain is Large ribosomal subunit protein uL5 from Aster yellows witches'-broom phytoplasma (strain AYWB).